Reading from the N-terminus, the 402-residue chain is MYGITSTANSTGNQSYANRLFIYEVVGLGGDGRNENSLVRKSGTTFITVPYARMNQEMQRITKLGGKIVSIRPAEDAAQIVSEGQSSAQASAQSPMASSTKIVHPKTTDTSVPVNIYRPKTPFLGKCIENYELVDEGGSGTVRHVTFDISEGDLRYLEGQSIGIIPPGEDKNGKPHKLRLYSIASTRHGDMEDNKTVSLCVRQLEYQDPESGETVYGVCSTYLCNLPVGTDDVKITGPVGKEMLLPDDEDATVVMLATGTGIAPFRAFLWRMFKEQHEDYKFKGKAWLIFGVPYTANILYKDDFEKMAAENPDNFRLTYAISREQKTADGGKVYVQSRVSEYADELFEMIQKPNTHVYMCGLKGMQPPIDETFTAEAEKRGLNWEEMRRSMKKEHRWHVEVY.

In terms of domain architecture, CpcD-like spans asparagine 18–alanine 74. Residues isoleucine 80 to lysine 101 form a disordered region. Residues glutamine 85–serine 99 show a composition bias toward low complexity. The 126-residue stretch at lysine 120 to leucine 245 folds into the FAD-binding FR-type domain. FAD is bound by residues arginine 179–serine 182, cysteine 200–arginine 202, tyrosine 206, valine 218–serine 220, and threonine 260. Residues serine 182 and arginine 202 each coordinate NADP(+). Residues threonine 260, valine 292–proline 293, serine 322–arginine 323, lysine 332, lysine 332–glutamine 336, glycine 361–leucine 362, and glutamate 400 each bind NADP(+).

This sequence belongs to the ferredoxin--NADP reductase type 1 family. It depends on FAD as a cofactor.

It is found in the cellular thylakoid membrane. The catalysed reaction is 2 reduced [2Fe-2S]-[ferredoxin] + NADP(+) + H(+) = 2 oxidized [2Fe-2S]-[ferredoxin] + NADPH. The polypeptide is Ferredoxin--NADP reductase (petH) (Picosynechococcus sp. (strain ATCC 27264 / PCC 7002 / PR-6) (Agmenellum quadruplicatum)).